The primary structure comprises 263 residues: Phosphonoacetaldehyde hydrolase (263 aa).

Aspartate 10 functions as the Nucleophile in the catalytic mechanism. Mg(2+) contacts are provided by aspartate 10 and alanine 12. Catalysis depends on lysine 51, which acts as the Schiff-base intermediate with substrate. Aspartate 184 contributes to the Mg(2+) binding site.

The protein belongs to the HAD-like hydrolase superfamily. PhnX family. As to quaternary structure, homodimer. Mg(2+) serves as cofactor.

It catalyses the reaction phosphonoacetaldehyde + H2O = acetaldehyde + phosphate + H(+). In terms of biological role, involved in phosphonate degradation. This is Phosphonoacetaldehyde hydrolase from Bacteroides fragilis (strain ATCC 25285 / DSM 2151 / CCUG 4856 / JCM 11019 / LMG 10263 / NCTC 9343 / Onslow / VPI 2553 / EN-2).